Consider the following 116-residue polypeptide: Large ribosomal subunit protein bL20 (116 aa).

The protein belongs to the bacterial ribosomal protein bL20 family.

In terms of biological role, binds directly to 23S ribosomal RNA and is necessary for the in vitro assembly process of the 50S ribosomal subunit. It is not involved in the protein synthesizing functions of that subunit. This Mycoplasmopsis fermentans (Mycoplasma fermentans) protein is Large ribosomal subunit protein bL20 (rplT).